Here is a 262-residue protein sequence, read N- to C-terminus: MSGQTTSEYISHHLSFLKTGDGFWNVHIDTLFFSILAAVIFLFVFSRVGKKATTGVPGKMQCLVEIVVEWVNGIVKENFHGPRNVVAPLALTIFCWVFIMNAIDLIPVDFLPQFAGLFGIHYLRAVPTADISATLGMSICVFFLILFYTIKSKGFKGLVKEYTLHPFNHWAFIPVNFILETVTLLAKPISLAFRLFGNMYAGELIFILIAVMYSANMAIAALGIPLHLAWAIFHILVITLQAFIFMMLTVVYLSIAYNKADH.

A run of 5 helical transmembrane segments spans residues 26 to 46, 86 to 106, 130 to 150, 204 to 226, and 240 to 260; these read VHID…FVFS, VAPL…IDLI, DISA…FYTI, LIFI…GIPL, and LQAF…YNKA.

The protein belongs to the ATPase A chain family. F-type ATPases have 2 components, CF(1) - the catalytic core - and CF(0) - the membrane proton channel. CF(1) has five subunits: alpha(3), beta(3), gamma(1), delta(1), epsilon(1). CF(0) has three main subunits: a(1), b(2) and c(9-12). The alpha and beta chains form an alternating ring which encloses part of the gamma chain. CF(1) is attached to CF(0) by a central stalk formed by the gamma and epsilon chains, while a peripheral stalk is formed by the delta and b chains.

The protein localises to the cell inner membrane. In terms of biological role, key component of the proton channel; it plays a direct role in the translocation of protons across the membrane. The protein is ATP synthase subunit a of Haemophilus influenzae (strain 86-028NP).